The following is a 1905-amino-acid chain: Low-density lipoprotein receptor-related protein 4 (1905 aa).

The signal sequence occupies residues 1 to 20 (MRRQWGALLLGALLCAHGLA). Residues 21–1725 (SSPECACGRS…AAPGEGLHIS (1705 aa)) are Extracellular-facing. 8 consecutive LDL-receptor class A domains span residues 26 to 67 (ACGR…DGCI), 70 to 106 (TCSP…QDCP), 109 to 144 (ECEE…EQCD), 147 to 183 (KCSD…ENCP), 190 to 226 (PCNL…SDCS), 230 to 266 (PCRS…RNCT), 269 to 305 (MCTA…ENCE), and 311 to 350 (QCAL…QNCR). 30 disulfides stabilise this stretch: Cys-27/Cys-44, Cys-34/Cys-57, Cys-51/Cys-66, Cys-71/Cys-83, Cys-78/Cys-96, Cys-90/Cys-105, Cys-110/Cys-122, Cys-117/Cys-135, Cys-129/Cys-143, Cys-148/Cys-160, Cys-155/Cys-173, Cys-167/Cys-182, Cys-191/Cys-203, Cys-198/Cys-216, Cys-210/Cys-225, Cys-231/Cys-243, Cys-238/Cys-256, Cys-250/Cys-265, Cys-270/Cys-282, Cys-277/Cys-295, Cys-289/Cys-304, Cys-312/Cys-324, Cys-319/Cys-337, Cys-331/Cys-349, Cys-358/Cys-369, Cys-365/Cys-378, Cys-380/Cys-393, Cys-399/Cys-409, Cys-405/Cys-418, and Cys-420/Cys-433. Residue Asn-264 is glycosylated (N-linked (GlcNAc...) asparagine). Residues 354–394 (GEENCNVNNGGCAQKCQMVRGAVQCTCHTGYRLTEDGHTCQ) enclose the EGF-like 1; calcium-binding domain. Residues 395 to 434 (DVNECAEEGYCSQGCTNSEGAFQCWCETGYELRPDRRSCK) form the EGF-like 2; calcium-binding domain. LDL-receptor class B repeat units lie at residues 480–522 (ELVF…DWVH), 523–565 (DKLY…HPME), 566–609 (GTIY…DYAG), 610–652 (RRMY…FEDS), and 653–693 (LYWT…LHPQ). The N-linked (GlcNAc...) asparagine glycan is linked to Asn-498. Residues 698-737 (GKNRCGDNNGGCTHLCLPSGQNYTCACPTGFRKISSHACA) enclose the EGF-like 3 domain. Disulfide bonds link Cys-702/Cys-713, Cys-709/Cys-722, and Cys-724/Cys-736. N-linked (GlcNAc...) asparagine glycosylation occurs at Asn-719. 5 LDL-receptor class B repeats span residues 785–827 (DHVY…DWVT), 828–870 (NKLY…EPMG), 871–914 (GYMY…DYGS), 915–956 (QRLY…LYGE), and 957–998 (RIYW…FHRR). The N-linked (GlcNAc...) asparagine glycan is linked to Asn-901. N-linked (GlcNAc...) asparagine glycosylation occurs at Asn-1077. LDL-receptor class B repeat units lie at residues 1093 to 1135 (GKVY…DAIG), 1136 to 1178 (RKVY…YHEM), 1179 to 1222 (GFMY…DKAS), 1223 to 1263 (SQLL…LLDS), 1264 to 1306 (YIYW…DRAQ), 1397 to 1439 (GKVY…DWVA), 1440 to 1482 (RNLY…FPRK), 1483 to 1526 (GYLF…DYDT), 1527 to 1568 (RRIY…QDRW), and 1569 to 1610 (IYWT…SPQR). Residues Asn-1415 and Asn-1467 are each glycosylated (N-linked (GlcNAc...) asparagine). The segment at 1659-1686 (PRATGMSEKSPVLPNTPPTTLYSSTTRT) is disordered. Positions 1676–1686 (PTTLYSSTTRT) are enriched in low complexity. Residues 1726 to 1746 (YAIGGLLSILLILVVIAALML) traverse the membrane as a helical segment. Topologically, residues 1747-1905 (YRHKKSKFTD…ERKLSSESQV (159 aa)) are cytoplasmic. The short motif at 1766–1769 (NPSY) is the Endocytosis signal element. A disordered region spans residues 1852 to 1905 (ASSGSLDDTETEQLLQEEQSECSSVHTAATPERRGSLPDTGWKHERKLSSESQV). Basic and acidic residues predominate over residues 1882 to 1905 (PERRGSLPDTGWKHERKLSSESQV).

The protein belongs to the LDLR family. Homooligomer. Interacts with MUSK; the heterodimer forms an AGRIN receptor complex that binds AGRIN resulting in activation of MUSK. Interacts (via the extracellular domain) with SOST; the interaction facilitates the inhibition of Wnt signaling. Interacts with MESD; the interaction promotes glycosylation of LRP4 and its cell-surface expression. In terms of tissue distribution, expressed in bone; present in osteoblasts and osteocytes. No expression is observed in osteoclast. Expressed in several regions of the brain.

It is found in the cell membrane. Functionally, mediates SOST-dependent inhibition of bone formation. Functions as a specific facilitator of SOST-mediated inhibition of Wnt signaling. Plays a key role in the formation and the maintenance of the neuromuscular junction (NMJ), the synapse between motor neuron and skeletal muscle. Directly binds AGRIN and recruits it to the MUSK signaling complex. Mediates the AGRIN-induced phosphorylation of MUSK, the kinase of the complex. The activation of MUSK in myotubes induces the formation of NMJ by regulating different processes including the transcription of specific genes and the clustering of AChR in the postsynaptic membrane. Alternatively, may be involved in the negative regulation of the canonical Wnt signaling pathway, being able to antagonize the LRP6-mediated activation of this pathway. More generally, has been proposed to function as a cell surface endocytic receptor binding and internalizing extracellular ligands for degradation by lysosomes. May play an essential role in the process of digit differentiation. This is Low-density lipoprotein receptor-related protein 4 (LRP4) from Homo sapiens (Human).